The primary structure comprises 310 residues: Protoheme IX farnesyltransferase (310 aa).

8 helical membrane-spanning segments follow: residues 31–51 (VIEL…RGSV), 53–73 (PLLI…ANTL), 102–122 (NALI…WGTS), 124–144 (LLSG…YTLL), 149–169 (TSQN…IGWS), 170–190 (AVTG…FFWT), 242–262 (LATG…FLVM), and 289–309 (LAVV…TLLG).

It belongs to the UbiA prenyltransferase family. Protoheme IX farnesyltransferase subfamily.

The protein resides in the cell membrane. It carries out the reaction heme b + (2E,6E)-farnesyl diphosphate + H2O = Fe(II)-heme o + diphosphate. It participates in porphyrin-containing compound metabolism; heme O biosynthesis; heme O from protoheme: step 1/1. Functionally, converts heme B (protoheme IX) to heme O by substitution of the vinyl group on carbon 2 of heme B porphyrin ring with a hydroxyethyl farnesyl side group. The sequence is that of Protoheme IX farnesyltransferase from Mycobacterium sp. (strain JLS).